A 549-amino-acid polypeptide reads, in one-letter code: Glucose-6-phosphate isomerase (549 aa).

E355 functions as the Proton donor in the catalytic mechanism. Catalysis depends on residues H386 and K514.

It belongs to the GPI family.

The protein localises to the cytoplasm. It carries out the reaction alpha-D-glucose 6-phosphate = beta-D-fructose 6-phosphate. It functions in the pathway carbohydrate biosynthesis; gluconeogenesis. The protein operates within carbohydrate degradation; glycolysis; D-glyceraldehyde 3-phosphate and glycerone phosphate from D-glucose: step 2/4. Functionally, catalyzes the reversible isomerization of glucose-6-phosphate to fructose-6-phosphate. This Salmonella paratyphi A (strain AKU_12601) protein is Glucose-6-phosphate isomerase.